The chain runs to 485 residues: Cysteine--tRNA ligase (485 aa).

C27 contributes to the Zn(2+) binding site. Positions 29–39 (ITAYDFSHIGH) match the 'HIGH' region motif. Zn(2+) is bound by residues C208, H233, and E237. Residues 265–269 (KMSKS) carry the 'KMSKS' region motif. Residue K268 coordinates ATP.

Belongs to the class-I aminoacyl-tRNA synthetase family. As to quaternary structure, monomer. Requires Zn(2+) as cofactor.

It is found in the cytoplasm. The catalysed reaction is tRNA(Cys) + L-cysteine + ATP = L-cysteinyl-tRNA(Cys) + AMP + diphosphate. This Lawsonia intracellularis (strain PHE/MN1-00) protein is Cysteine--tRNA ligase.